The following is a 201-amino-acid chain: Ubiquitin-conjugating enzyme E2 E2 (201 aa).

Over residues M1–D10 the composition is skewed to basic and acidic residues. A disordered region spans residues M1–T55. N-acetylserine is present on S2. 4 positions are modified to phosphoserine: S11, S15, S18, and S19. A compositionally biased stretch (basic and acidic residues) spans G21–I45. Over residues S46–T55 the composition is skewed to low complexity. In terms of domain architecture, UBC core spans T55–T201. Residue C139 is the Glycyl thioester intermediate of the active site.

It belongs to the ubiquitin-conjugating enzyme family. Post-translationally, autoubiquitinated.

It carries out the reaction S-ubiquitinyl-[E1 ubiquitin-activating enzyme]-L-cysteine + [E2 ubiquitin-conjugating enzyme]-L-cysteine = [E1 ubiquitin-activating enzyme]-L-cysteine + S-ubiquitinyl-[E2 ubiquitin-conjugating enzyme]-L-cysteine.. The protein operates within protein modification; protein ubiquitination. Functionally, accepts ubiquitin from the E1 complex and catalyzes its covalent attachment to other proteins. In vitro catalyzes 'Lys-11'- and 'Lys-48'-, as well as 'Lys-63'-linked polyubiquitination. Catalyzes the ISGylation of influenza A virus NS1 protein. The polypeptide is Ubiquitin-conjugating enzyme E2 E2 (Ube2e2) (Mus musculus (Mouse)).